A 185-amino-acid chain; its full sequence is Sarcoplasmic calcium-binding proteins II, V, VI, and VII (185 aa).

4 consecutive EF-hand domains span residues 5-41, 57-92, 102-137, and 138-173; these read FQKQ…YKEV, SLED…TIAT, WCQN…FQLQ, and CADV…TSPA. 13 residues coordinate Ca(2+): aspartate 19, asparagine 21, aspartate 23, serine 25, aspartate 30, aspartate 70, asparagine 72, aspartate 74, glutamate 81, aspartate 115, serine 117, aspartate 119, and glutamate 126.

Like parvalbumins, SCPs seem to be more abundant in fast contracting muscles, but no functional relationship can be established from this distribution. The protein is Sarcoplasmic calcium-binding proteins II, V, VI, and VII of Branchiostoma lanceolatum (Common lancelet).